We begin with the raw amino-acid sequence, 651 residues long: Probable export ATP-binding/permease protein Pfl01_2215 (651 aa).

One can recognise an ABC transporter domain in the interval 6–244 (LQLTGISRSF…LSNEDAVPKS (239 aa)). 42-49 (GASGSGKS) contributes to the ATP binding site. Transmembrane regions (helical) follow at residues 250-270 (LVAS…ALIS), 276-296 (LLTM…SAIG), 524-544 (LALL…IGVM), 585-605 (LGGA…SLFI), and 614-634 (LTSV…FGFV).

Belongs to the ABC transporter superfamily. Macrolide exporter (TC 3.A.1.122) family. As to quaternary structure, probably part of a tripartite efflux system, which is composed of an inner membrane transporter, a periplasmic membrane fusion protein, and an outer membrane component.

It localises to the cell inner membrane. Probably part of a tripartite efflux system. In Pseudomonas fluorescens (strain Pf0-1), this protein is Probable export ATP-binding/permease protein Pfl01_2215.